The sequence spans 323 residues: Serine/threonine-protein kinase-transforming protein raf (323 aa).

Residues 24 to 284 (VMLSTRIGSG…PQILSSIELL (261 aa)) form the Protein kinase domain. Residues 30-38 (IGSGSFGTV) and K50 contribute to the ATP site. The active-site Proton acceptor is D143.

This sequence belongs to the protein kinase superfamily. TKL Ser/Thr protein kinase family. RAF subfamily.

It carries out the reaction L-seryl-[protein] + ATP = O-phospho-L-seryl-[protein] + ADP + H(+). The enzyme catalyses L-threonyl-[protein] + ATP = O-phospho-L-threonyl-[protein] + ADP + H(+). In Murine sarcoma virus 3611, this protein is Serine/threonine-protein kinase-transforming protein raf (V-RAF).